The sequence spans 315 residues: Ribosomal RNA small subunit methyltransferase H (315 aa).

Residues 37–39 (GGH), Asp-57, Leu-91, Asp-105, and Gln-112 each bind S-adenosyl-L-methionine.

It belongs to the methyltransferase superfamily. RsmH family.

It localises to the cytoplasm. The enzyme catalyses cytidine(1402) in 16S rRNA + S-adenosyl-L-methionine = N(4)-methylcytidine(1402) in 16S rRNA + S-adenosyl-L-homocysteine + H(+). In terms of biological role, specifically methylates the N4 position of cytidine in position 1402 (C1402) of 16S rRNA. This chain is Ribosomal RNA small subunit methyltransferase H, found in Syntrophus aciditrophicus (strain SB).